A 411-amino-acid chain; its full sequence is Mannan endo-1,4-beta-mannosidase 1 (411 aa).

Positions M1–G17 are cleaved as a signal peptide. An N-linked (GlcNAc...) asparagine glycan is attached at N33. 2 residues coordinate substrate: W87 and N197. E198 (proton donor) is an active-site residue. An N-linked (GlcNAc...) asparagine glycan is attached at N202. Y277 contacts substrate. E319 functions as the Nucleophile in the catalytic mechanism. W361 is a substrate binding site. N-linked (GlcNAc...) asparagine glycans are attached at residues N366 and N384.

Belongs to the glycosyl hydrolase 5 (cellulase A) family. In terms of tissue distribution, expressed in roots, stems and flowers.

It localises to the secreted. The enzyme catalyses Random hydrolysis of (1-&gt;4)-beta-D-mannosidic linkages in mannans, galactomannans and glucomannans.. This chain is Mannan endo-1,4-beta-mannosidase 1 (MAN1), found in Arabidopsis thaliana (Mouse-ear cress).